Reading from the N-terminus, the 145-residue chain is Small ribosomal subunit protein uS12 (145 aa).

It belongs to the universal ribosomal protein uS12 family. As to quaternary structure, part of the 30S ribosomal subunit.

Functionally, with S4 and S5 plays an important role in translational accuracy. Located at the interface of the 30S and 50S subunits. The chain is Small ribosomal subunit protein uS12 from Cenarchaeum symbiosum (strain A).